A 347-amino-acid polypeptide reads, in one-letter code: MNIDMAALHAIEVDRGISVNELLETIKSALLTAYRHTQGHQTDARIEIDRKTGVVRVIARETDEAGNLISEWDDTPEGFGRIAATTARQVMLQRFRDAENERTYGEFSTREGEIVAGVIQRDSRANARGLVVVRIGTETKASEGVIPAAEQVPGESYEHGNRLRCYVVGVTRGAREPLITLSRTHPNLVRKLFSLEVPEIADGSVEIVAVAREAGHRSKIAVRSNVAGLNAKGACIGPMGQRVRNVMSELSGEKIDIIDYDDDPARFVANALSPAKVVSVSVIDQTARAARVVVPDFQLSLAIGKEGQNARLAARLTGWRIDIRGDAPPPPPGQPEPGVSRGMAHDR.

One can recognise an S1 motif domain in the interval 112-184; that stretch reads GEIVAGVIQR…REPLITLSRT (73 aa). The 61-residue stretch at 287–347 folds into the KH domain; it reads ARAARVVVPD…GVSRGMAHDR (61 aa). The segment at 322-347 is disordered; it reads DIRGDAPPPPPGQPEPGVSRGMAHDR.

Belongs to the NusA family. Monomer. Binds directly to the core enzyme of the DNA-dependent RNA polymerase and to nascent RNA.

It localises to the cytoplasm. Functionally, participates in both transcription termination and antitermination. This chain is Transcription termination/antitermination protein NusA, found in Mycobacterium bovis (strain ATCC BAA-935 / AF2122/97).